The chain runs to 403 residues: uncharacterized protein (403 aa).

The 124-residue stretch at 3 to 126 (QVKIGQFKFG…EVIPQVLCTG (124 aa)) folds into the Bro-N domain.

This is an uncharacterized protein from Lepidoptera (butterflies and moths).